The chain runs to 286 residues: Bifunctional protein FolD (286 aa).

Residues 166–168 (GAS) and Ile232 each bind NADP(+).

Belongs to the tetrahydrofolate dehydrogenase/cyclohydrolase family. Homodimer.

It catalyses the reaction (6R)-5,10-methylene-5,6,7,8-tetrahydrofolate + NADP(+) = (6R)-5,10-methenyltetrahydrofolate + NADPH. The enzyme catalyses (6R)-5,10-methenyltetrahydrofolate + H2O = (6R)-10-formyltetrahydrofolate + H(+). The protein operates within one-carbon metabolism; tetrahydrofolate interconversion. Catalyzes the oxidation of 5,10-methylenetetrahydrofolate to 5,10-methenyltetrahydrofolate and then the hydrolysis of 5,10-methenyltetrahydrofolate to 10-formyltetrahydrofolate. In Shewanella piezotolerans (strain WP3 / JCM 13877), this protein is Bifunctional protein FolD.